The sequence spans 338 residues: Sorting nexin-15 (338 aa).

A PX domain is found at M1–R131. 4 residues coordinate a 1,2-diacyl-sn-glycero-3-phospho-(1D-myo-inositol-3-phosphate): R52, S54, R88, and R97. An Omega-N-methylarginine modification is found at R106. The interval E134 to A155 is disordered. Residues L142–P151 are compositionally biased toward pro residues. 2 positions are modified to phosphoserine: S202 and S228. Residues V240–L270 form a disordered region. The 73-residue stretch at A266 to P338 folds into the MIT domain.

This sequence belongs to the sorting nexin family. Homodimer. Interacts with SNX1, SNX2 and SNX4.

It localises to the cytoplasm. The protein localises to the membrane. Its subcellular location is the cytoplasmic vesicle membrane. Its function is as follows. May be involved in several stages of intracellular trafficking. Overexpression of SNX15 disrupts the normal trafficking of proteins from the plasma membrane to recycling endosomes or the TGN. This is Sorting nexin-15 (Snx15) from Rattus norvegicus (Rat).